We begin with the raw amino-acid sequence, 199 residues long: Translation machinery-associated protein 22 (199 aa).

One can recognise an SUI1 domain in the interval 97 to 168 (VVIRREARTK…EVEAYIHALL (72 aa)).

The protein belongs to the DENR family. As to quaternary structure, interacts with the 40S ribosomal subunit.

The protein localises to the cytoplasm. The sequence is that of Translation machinery-associated protein 22 (TMA22) from Eremothecium gossypii (strain ATCC 10895 / CBS 109.51 / FGSC 9923 / NRRL Y-1056) (Yeast).